A 319-amino-acid polypeptide reads, in one-letter code: MSDYQVLLYYKYTTIDDPETFAKEHLAACKEMELKGRILVATEGINGTVSGTVEATNKYMDYMANDARFADMVFKIDAADAHAFKKMHVRPRAEIVSLSLEEDVNPLEVTGTYLEPSEFREALLDEDTVILDARNDYEFDIGHFRGAVRPDIQNFRELPGWIEDNREQLADKKIVTYCTGGIRCEKFSGWLKTAGFDDVSQLHGGIATYGKNEETKGELWDGQMYVFDERIAVPINQVNPTIVGKDYFDGTPCERYINCANPYCNKQILASIENEKKYLRSCSHDCRVHPANLYTKNLSKEEFTERLQAIDETLPEMVQ.

A Rhodanese domain is found at 124-218 (LDEDTVILDA…YGKNEETKGE (95 aa)). C178 acts as the Cysteine persulfide intermediate in catalysis.

This sequence belongs to the TrhO family.

The enzyme catalyses uridine(34) in tRNA + AH2 + O2 = 5-hydroxyuridine(34) in tRNA + A + H2O. Its function is as follows. Catalyzes oxygen-dependent 5-hydroxyuridine (ho5U) modification at position 34 in tRNAs. The polypeptide is tRNA uridine(34) hydroxylase (Listeria monocytogenes serotype 4b (strain CLIP80459)).